We begin with the raw amino-acid sequence, 487 residues long: 2-aminomuconic semialdehyde dehydrogenase (487 aa).

Residue 231–236 participates in NAD(+) binding; sequence GSQPTA. The active-site Proton acceptor is the Glu-253. Cys-287 functions as the Nucleophile in the catalytic mechanism.

Belongs to the aldehyde dehydrogenase family.

The protein localises to the cytoplasm. The catalysed reaction is 2-aminomuconate 6-semialdehyde + NAD(+) + H2O = (2Z,4E)-2-aminomuconate + NADH + 2 H(+). It participates in amino-acid degradation; L-kynurenine degradation. In terms of biological role, catalyzes the NAD-dependent oxidation of 2-aminomuconic semialdehyde of the kynurenine metabolic pathway in L-tryptophan degradation. This is 2-aminomuconic semialdehyde dehydrogenase (ALDH8A1) from Bos taurus (Bovine).